Consider the following 213-residue polypeptide: Phosphoheptose isomerase (213 aa).

One can recognise an SIS domain in the interval 50–208; sequence MAETFEGGGR…IDLVERMLGY (159 aa). Residue 65–67 coordinates substrate; the sequence is NGG. Residues His74 and Glu78 each coordinate Zn(2+). Substrate is bound by residues Glu78, 109-110, 135-137, Ser140, and Gln188; these read ND and STS. Gln188 and His196 together coordinate Zn(2+).

It belongs to the SIS family. GmhA subfamily. Zn(2+) serves as cofactor.

The protein localises to the cytoplasm. It catalyses the reaction 2 D-sedoheptulose 7-phosphate = D-glycero-alpha-D-manno-heptose 7-phosphate + D-glycero-beta-D-manno-heptose 7-phosphate. Its pathway is carbohydrate biosynthesis; D-glycero-D-manno-heptose 7-phosphate biosynthesis; D-glycero-alpha-D-manno-heptose 7-phosphate and D-glycero-beta-D-manno-heptose 7-phosphate from sedoheptulose 7-phosphate: step 1/1. Its function is as follows. Catalyzes the isomerization of sedoheptulose 7-phosphate in D-glycero-D-manno-heptose 7-phosphate. The sequence is that of Phosphoheptose isomerase from Chlorobium phaeovibrioides (strain DSM 265 / 1930) (Prosthecochloris vibrioformis (strain DSM 265)).